We begin with the raw amino-acid sequence, 463 residues long: MDNGMLSRFIMTQTLLVFCISMTLSSHFGFSQMPTSSVQDETNDNITIFTRILDGLLDGYDNRLRPGLGERITQVRTDIYVTSFGPVSDTEMEYTIDVFFRQSWKDERLRFKGPMQRLPLNNLLASKIWTPDTFFHNGKKSIAHNMTTPNKLLRLEDDGTLLYTMRLTISAECPMQLEDFPMDAHACPLKFGSYAYPNSEVVYVWTNGSTKSVVVAEDGSRLNQYHLMGQTVGTENISTSTGEYTIMTAHFHLKRKIGYFVIQTYLPCIMTVILSQVSFWLNRESVPARTVFGVTTVLTMTTLSISARNSLPKVAYATAMDWFIAVCYAFVFSALIEFATVNYFTKRGWAWDGKKALEAAKIKKKERELILNKSTNAFTTGKLTHPPNIPKEQPPAGTANAPTVSIKASEEKTAESKKTYNSISKIDKMSRIVFPILFGTFNLVYWATYLNREPVIKGATSPK.

The first 25 residues, 1–25 (MDNGMLSRFIMTQTLLVFCISMTLS), serve as a signal peptide directing secretion. Residues 26–260 (SHFGFSQMPT…FHLKRKIGYF (235 aa)) are Extracellular-facing. A glycan (N-linked (GlcNAc...) asparagine) is linked at Asn-45. Residue Arg-101 coordinates 4-aminobutanoate. N-linked (GlcNAc...) asparagine glycosylation is present at Asn-145. 4-aminobutanoate is bound at residue Thr-164. A disulfide bridge links Cys-173 with Cys-187. Asn-207 and Asn-236 each carry an N-linked (GlcNAc...) asparagine glycan. Helical transmembrane passes span 261-281 (VIQT…SFWL), 287-308 (PART…ISAR), and 319-340 (AMDW…EFAT). At 341–428 (VNYFTKRGWA…TYNSISKIDK (88 aa)) the chain is on the cytoplasmic side. Lys-355 participates in a covalent cross-link: Glycyl lysine isopeptide (Lys-Gly) (interchain with G-Cter in ubiquitin). Positions 387 to 408 (PNIPKEQPPAGTANAPTVSIKA) are disordered. A helical membrane pass occupies residues 429 to 449 (MSRIVFPILFGTFNLVYWATY).

Belongs to the ligand-gated ion channel (TC 1.A.9) family. Gamma-aminobutyric acid receptor (TC 1.A.9.5) subfamily. GABRA5 sub-subfamily. Heteropentamer, formed by a combination of alpha (GABRA1-6), beta (GABRB1-3), gamma (GABRG1-3), delta (GABRD), epsilon (GABRE), rho (GABRR1-3), pi (GABRP) and theta (GABRQ) chains, each subunit exhibiting distinct physiological and pharmacological properties. As to expression, expressed in brain, in hippocampal pyramidal neurons.

The protein resides in the postsynaptic cell membrane. It localises to the cell membrane. It catalyses the reaction chloride(in) = chloride(out). In terms of biological role, alpha subunit of the heteropentameric ligand-gated chloride channel gated by gamma-aminobutyric acid (GABA), a major inhibitory neurotransmitter in the brain. GABA-gated chloride channels, also named GABA(A) receptors (GABAAR), consist of five subunits arranged around a central pore and contain GABA active binding site(s) located at the alpha and beta subunit interface(s). When activated by GABA, GABAARs selectively allow the flow of chloride anions across the cell membrane down their electrochemical gradient. GABAARs containing alpha-5/GABRA5 are mainly extrasynaptic and contribute to the tonic GABAergic inhibition of the hippocampus. Extrasynaptic alpha-5-containing GABAARs in CA1 pyramidal neurons play a role in learning and memory processes. In Mus musculus (Mouse), this protein is Gamma-aminobutyric acid receptor subunit alpha-5.